Consider the following 239-residue polypeptide: 1-(5-phosphoribosyl)-5-[(5-phosphoribosylamino)methylideneamino] imidazole-4-carboxamide isomerase (239 aa).

D9 functions as the Proton acceptor in the catalytic mechanism. D131 functions as the Proton donor in the catalytic mechanism.

It belongs to the HisA/HisF family.

The protein resides in the cytoplasm. It catalyses the reaction 1-(5-phospho-beta-D-ribosyl)-5-[(5-phospho-beta-D-ribosylamino)methylideneamino]imidazole-4-carboxamide = 5-[(5-phospho-1-deoxy-D-ribulos-1-ylimino)methylamino]-1-(5-phospho-beta-D-ribosyl)imidazole-4-carboxamide. It participates in amino-acid biosynthesis; L-histidine biosynthesis; L-histidine from 5-phospho-alpha-D-ribose 1-diphosphate: step 4/9. This chain is 1-(5-phosphoribosyl)-5-[(5-phosphoribosylamino)methylideneamino] imidazole-4-carboxamide isomerase, found in Bacteroides thetaiotaomicron (strain ATCC 29148 / DSM 2079 / JCM 5827 / CCUG 10774 / NCTC 10582 / VPI-5482 / E50).